The following is a 194-amino-acid chain: Histone H1.0 (194 aa).

Methionine 1 carries the post-translational modification N-acetylmethionine. Residues 1 to 26 (MTENSTSTPAAKPKRAKAAKKSTDHP) are disordered. Threonine 2 carries the N-acetylthreonine; in Histone H1.0, N-terminally processed modification. An H15 domain is found at 24-97 (DHPKYSDMIV…GASGSFRLAK (74 aa)). Arginine 42 is subject to Citrulline. Residues 86-194 (GVGASGSFRL…SSAKRASKKK (109 aa)) are disordered. Serine 104 is modified (ADP-ribosylserine). Over residues 105-194 (VAFKKTKKEV…SSAKRASKKK (90 aa)) the composition is skewed to basic residues.

The protein belongs to the histone H1/H5 family. Post-translationally, ADP-ribosylated on Ser-104 in response to DNA damage.

It localises to the nucleus. The protein localises to the chromosome. In terms of biological role, histones H1 are necessary for the condensation of nucleosome chains into higher-order structures. The histones H1.0 are found in cells that are in terminal stages of differentiation or that have low rates of cell division. In Rattus norvegicus (Rat), this protein is Histone H1.0 (H1-0).